We begin with the raw amino-acid sequence, 178 residues long: Large ribosomal subunit protein uL6 (178 aa).

It belongs to the universal ribosomal protein uL6 family. In terms of assembly, part of the 50S ribosomal subunit.

This protein binds to the 23S rRNA, and is important in its secondary structure. It is located near the subunit interface in the base of the L7/L12 stalk, and near the tRNA binding site of the peptidyltransferase center. This Corynebacterium aurimucosum (strain ATCC 700975 / DSM 44827 / CIP 107346 / CN-1) (Corynebacterium nigricans) protein is Large ribosomal subunit protein uL6.